A 261-amino-acid chain; its full sequence is Phosphoadenosine phosphosulfate reductase (261 aa).

The protein belongs to the PAPS reductase family. CysH subfamily.

It catalyses the reaction [thioredoxin]-disulfide + sulfite + adenosine 3',5'-bisphosphate + 2 H(+) = [thioredoxin]-dithiol + 3'-phosphoadenylyl sulfate. Its pathway is sulfur metabolism; hydrogen sulfide biosynthesis; sulfite from sulfate: step 3/3. The NADP dependent reduction of PAPS into sulfite involves thioredoxin which probably plays the role of a thiol carrier. The sequence is that of Phosphoadenosine phosphosulfate reductase (MET16) from Saccharomyces cerevisiae (strain ATCC 204508 / S288c) (Baker's yeast).